The sequence spans 621 residues: 2-hydroxyacyl-CoA lyase 2 (621 aa).

Residues 7–29 traverse the membrane as a helical segment; the sequence is LGCSLGAALGGVIFASYKLGLLY. Thiamine diphosphate is bound at residue Glu87. Positions 459 to 539 are thiamine pyrophosphate binding; the sequence is DFVGSAAYIM…VIALVGNDAC (81 aa). Mg(2+) contacts are provided by Asp510 and Asn536.

Belongs to the TPP enzyme family. Mg(2+) serves as cofactor. It depends on thiamine diphosphate as a cofactor.

The protein resides in the endoplasmic reticulum membrane. It carries out the reaction 2-hydroxyoctadecanoyl-CoA = heptadecanal + formyl-CoA. It catalyses the reaction (2R)-hydroxyhexadecanoyl-CoA = pentadecanal + formyl-CoA. Functionally, endoplasmic reticulum 2-OH acyl-CoA lyase involved in the cleavage (C1 removal) reaction in the fatty acid alpha-oxydation in a thiamine pyrophosphate (TPP)-dependent manner. The sequence is that of 2-hydroxyacyl-CoA lyase 2 (ilvbl) from Danio rerio (Zebrafish).